A 128-amino-acid polypeptide reads, in one-letter code: Putative lipid-binding protein At4g00165 (128 aa).

A signal peptide spans 1 to 23 (MGISKALRSLLILLLLNITFFFG). Intrachain disulfides connect C34-C90, C46-C76, C56-C75, and C92-C128.

Belongs to the plant LTP family. PEARLI1 subfamily.

It localises to the secreted. The protein is Putative lipid-binding protein At4g00165 of Arabidopsis thaliana (Mouse-ear cress).